The following is a 311-amino-acid chain: Protoheme IX farnesyltransferase (311 aa).

9 consecutive transmembrane segments (helical) span residues Ile38 to Met58, Tyr62 to Ile82, Leu113 to Trp133, Leu134 to Leu154, Ile162 to Gly182, Pro188 to Ile208, Phe230 to Phe250, Leu251 to Ile271, and Ala286 to Ala306.

This sequence belongs to the UbiA prenyltransferase family. Protoheme IX farnesyltransferase subfamily.

The protein resides in the cell inner membrane. The enzyme catalyses heme b + (2E,6E)-farnesyl diphosphate + H2O = Fe(II)-heme o + diphosphate. It participates in porphyrin-containing compound metabolism; heme O biosynthesis; heme O from protoheme: step 1/1. In terms of biological role, converts heme B (protoheme IX) to heme O by substitution of the vinyl group on carbon 2 of heme B porphyrin ring with a hydroxyethyl farnesyl side group. The chain is Protoheme IX farnesyltransferase from Psychromonas ingrahamii (strain DSM 17664 / CCUG 51855 / 37).